A 606-amino-acid chain; its full sequence is Phosphomethylpyrimidine synthase (606 aa).

Residues 1–13 (MTTADARTPASKQ) show a composition bias toward polar residues. 2 disordered regions span residues 1–49 (MTTA…SRPD) and 105–147 (AGRP…DGRP). Residues 14 to 31 (NDGTPDGTTPDAGTPNDG) show a composition bias toward low complexity. The span at 105–117 (AGRPVRPEDDGLK) shows a compositional bias: basic and acidic residues. Residues N213, M242, Y271, H307, 327–329 (SRG), 368–371 (DGLR), and E407 each bind substrate. H411 serves as a coordination point for Zn(2+). Y434 lines the substrate pocket. Residue H475 participates in Zn(2+) binding. [4Fe-4S] cluster-binding residues include C555, C558, and C563.

This sequence belongs to the ThiC family. Requires [4Fe-4S] cluster as cofactor.

The catalysed reaction is 5-amino-1-(5-phospho-beta-D-ribosyl)imidazole + S-adenosyl-L-methionine = 4-amino-2-methyl-5-(phosphooxymethyl)pyrimidine + CO + 5'-deoxyadenosine + formate + L-methionine + 3 H(+). It functions in the pathway cofactor biosynthesis; thiamine diphosphate biosynthesis. Functionally, catalyzes the synthesis of the hydroxymethylpyrimidine phosphate (HMP-P) moiety of thiamine from aminoimidazole ribotide (AIR) in a radical S-adenosyl-L-methionine (SAM)-dependent reaction. The chain is Phosphomethylpyrimidine synthase from Streptomyces griseus subsp. griseus (strain JCM 4626 / CBS 651.72 / NBRC 13350 / KCC S-0626 / ISP 5235).